The following is a 1929-amino-acid chain: Intraflagellar transport protein 140 (1929 aa).

2 WD repeats span residues 76-116 (QVQV…PSYK) and 119-158 (LHQEELCLIKWLSHGRILVTCDVSGQVILYKFSTDTYSFE). The disordered stretch occupies residues 774-795 (LSTPDTGSPAVEAEESPQRQTR). 3 LRR repeats span residues 957–980 (STSLNLLFVGSSMLFALKTGTFTK), 1019–1044 (ISLLQSIYISSEQRAKVPLLVQSLAE), and 1510–1532 (AQSLELCIKSNRMKELSNLLADI).

The protein resides in the cell projection. The protein localises to the cilium. It localises to the flagellum. It is found in the cytoplasm. Its subcellular location is the cytoskeleton. The protein resides in the flagellum axoneme. The protein localises to the flagellum basal body. In terms of biological role, component of the intraflagellar transport complex A (IFT-A) involved in flagellar assembly. The protein is Intraflagellar transport protein 140 of Giardia intestinalis (strain ATCC 50803 / WB clone C6) (Giardia lamblia).